The chain runs to 177 residues: Coatomer subunit zeta-1 (177 aa).

At Met1 the chain carries N-acetylmethionine.

It belongs to the adaptor complexes small subunit family. In terms of assembly, oligomeric complex that consists of at least the alpha, beta, beta', gamma, delta, epsilon and zeta subunits.

The protein localises to the cytoplasm. It localises to the golgi apparatus membrane. The protein resides in the cytoplasmic vesicle. It is found in the COPI-coated vesicle membrane. The coatomer is a cytosolic protein complex that binds to dilysine motifs and reversibly associates with Golgi non-clathrin-coated vesicles, which further mediate biosynthetic protein transport from the ER, via the Golgi up to the trans Golgi network. Coatomer complex is required for budding from Golgi membranes, and is essential for the retrograde Golgi-to-ER transport of dilysine-tagged proteins. The zeta subunit may be involved in regulating the coat assembly and, hence, the rate of biosynthetic protein transport due to its association-dissociation properties with the coatomer complex. In Homo sapiens (Human), this protein is Coatomer subunit zeta-1 (COPZ1).